Consider the following 613-residue polypeptide: ADP-ribosylation factor-binding protein GGA2 (613 aa).

In terms of domain architecture, VHS spans 33-163 (ATDPSMSEQD…MLKKQGIIKQ (131 aa)). The GAT domain maps to 188–315 (DEEKSKLLTR…GVLLYKQVME (128 aa)). Residues 316-483 (GRVTFGNRVT…VFVPLESVKP (168 aa)) form a unstructured hinge region. 2 disordered regions span residues 389-414 (GQNC…NPSA) and 435-466 (SQKS…SPSS). A compositionally biased stretch (polar residues) spans 399 to 414 (PSSSTLPGGGVQNPSA). At S400 the chain carries Phosphoserine. In terms of domain architecture, GAE spans 484 to 605 (SSLPPLIVYD…SEVGEVKDFP (122 aa)).

Belongs to the GGA protein family. Monomer. Interacts with NECAP1, TSG101, UBC and AFTPH/aftiphilin. Interacts with CNST. Interacts with GGA1 and GGA3. Binds to clathrin and activated ARFs, such as ARF1, ARF5 and ARF6. Binds RABEP1 and RABGEF1. Interacts with the type-I membrane proteins LRP3, M6PR/CD-MPR, IGF2R/CI-MPR and BACE1. Interacts (via N-terminal VHS domain) with SORL1/sorLA and SORT1 (via C-terminal cytosolic domain). Binds the accessory proteins CCDC91, P200, SYNRG, EPN4 and NECAP2. Interacts with ADRA2B. Interacts (via VHS domain) with PIK4B; the interaction is important for PIK4B location at the Golgi apparatus membrane. In terms of processing, ubiquitinated. Ubiquitously expressed.

The protein resides in the golgi apparatus. The protein localises to the trans-Golgi network membrane. It is found in the endosome membrane. Its subcellular location is the early endosome membrane. Its function is as follows. Plays a role in protein sorting and trafficking between the trans-Golgi network (TGN) and endosomes. Mediates the ARF-dependent recruitment of clathrin to the TGN and binds ubiquitinated proteins and membrane cargo molecules with a cytosolic acidic cluster-dileucine (DXXLL) motif. Mediates export of the GPCR receptor ADRA2B to the cell surface. Regulates retrograde transport of phosphorylated form of BACE1 from endosomes to the trans-Golgi network. The sequence is that of ADP-ribosylation factor-binding protein GGA2 (GGA2) from Homo sapiens (Human).